A 219-amino-acid polypeptide reads, in one-letter code: Interleukin-12 subunit alpha (219 aa).

The N-terminal stretch at methionine 1–alanine 22 is a signal peptide. N-linked (GlcNAc...) asparagine glycosylation is found at asparagine 24 and asparagine 93. 3 disulfides stabilise this stretch: cysteine 37/cysteine 110, cysteine 64/cysteine 196, and cysteine 85/cysteine 123.

The protein belongs to the IL-6 superfamily. Heterodimer with IL12B; disulfide-linked. This heterodimer is known as interleukin IL-12. Heterodimer with EBI3/IL27B; not disulfide-linked. This heterodimer is known as interleukin IL-35. Interacts with NBR1; this interaction promotes IL-12 secretion.

Its subcellular location is the secreted. In terms of biological role, heterodimerizes with IL12B to form the IL-12 cytokine or with EBI3/IL27B to form the IL-35 cytokine. IL-12 is primarily produced by professional antigen-presenting cells (APCs) such as B-cells and dendritic cells (DCs) as well as macrophages and granulocytes and regulates T-cell and natural killer-cell responses, induces the production of interferon-gamma (IFN-gamma), favors the differentiation of T-helper 1 (Th1) cells and is an important link between innate resistance and adaptive immunity. Mechanistically, exerts its biological effects through a receptor composed of IL12R1 and IL12R2 subunits. Binding to the receptor results in the rapid tyrosine phosphorylation of a number of cellular substrates including the JAK family kinases TYK2 and JAK2. In turn, recruited STAT4 gets phosphorylated and translocates to the nucleus where it regulates cytokine/growth factor responsive genes. As part of IL-35, plays essential roles in maintaining the immune homeostasis of the liver microenvironment and also functions as an immune-suppressive cytokine. Mediates biological events through unconventional receptors composed of IL12RB2 and gp130/IL6ST heterodimers or homodimers. Signaling requires the transcription factors STAT1 and STAT4, which form a unique heterodimer that binds to distinct DNA sites. This is Interleukin-12 subunit alpha (IL12A) from Papio anubis (Olive baboon).